Reading from the N-terminus, the 485-residue chain is Ribosomal protein uS12 methylthiotransferase RimO (485 aa).

In terms of domain architecture, MTTase N-terminal spans 19–135 (VKVGFISLGC…IGEVVAGILA (117 aa)). C28, C64, C98, C172, C176, and C179 together coordinate [4Fe-4S] cluster. Positions 158–387 (ATPGYTAYLK…MEVQQEIARR (230 aa)) constitute a Radical SAM core domain. One can recognise a TRAM domain in the interval 390–461 (QLQVGRELEV…DYDLLGEATE (72 aa)).

The protein belongs to the methylthiotransferase family. RimO subfamily. It depends on [4Fe-4S] cluster as a cofactor.

The protein resides in the cytoplasm. The enzyme catalyses L-aspartate(89)-[ribosomal protein uS12]-hydrogen + (sulfur carrier)-SH + AH2 + 2 S-adenosyl-L-methionine = 3-methylsulfanyl-L-aspartate(89)-[ribosomal protein uS12]-hydrogen + (sulfur carrier)-H + 5'-deoxyadenosine + L-methionine + A + S-adenosyl-L-homocysteine + 2 H(+). Catalyzes the methylthiolation of an aspartic acid residue of ribosomal protein uS12. The chain is Ribosomal protein uS12 methylthiotransferase RimO from Symbiobacterium thermophilum (strain DSM 24528 / JCM 14929 / IAM 14863 / T).